Here is a 740-residue protein sequence, read N- to C-terminus: Ethylene receptor 1 (740 aa).

Transmembrane regions (helical) follow at residues 23–43, 54–74, and 92–112; these read ISDF…IYFV, VLVQ…INLW, and VLTA…IPDL. Cu cation-binding residues include Cys65 and His69. The region spanning 158 to 307 is the GAF domain; that stretch reads DRHTILKTTL…VVADQVAVAL (150 aa). The Histidine kinase domain occupies 350 to 588; that stretch reads VMNHEMRTPM…TFIVKLGIAD (239 aa). His353 is subject to Phosphohistidine; by autocatalysis. The Response regulatory domain occupies 614 to 731; it reads KVLVMDDNGV…KMRSVLSELI (118 aa). The residue at position 662 (Asp662) is a 4-aspartylphosphate.

This sequence belongs to the ethylene receptor family. As to quaternary structure, homodimer; disulfide-linked. The cofactor is Cu cation. Post-translationally, activation probably requires a transfer of a phosphate group between a His in the transmitter domain and an Asp of the receiver domain. In terms of tissue distribution, in seeds and placenta.

It is found in the endoplasmic reticulum membrane. It carries out the reaction ATP + protein L-histidine = ADP + protein N-phospho-L-histidine.. Its function is as follows. May act early in the ethylene signal transduction pathway, possibly as an ethylene receptor, or as a regulator of the pathway. In Cucumis melo var. cantalupensis (Netted muskmelon), this protein is Ethylene receptor 1 (ETR1).